The primary structure comprises 202 residues: Small ribosomal subunit protein uS4 (202 aa).

Residues 23-42 (RKNARRAYAPGQHGQARKKR) form a disordered region. In terms of domain architecture, S4 RNA-binding spans 90–153 (MRLDNTVFRL…RSQDLVKRNM (64 aa)).

Belongs to the universal ribosomal protein uS4 family. As to quaternary structure, part of the 30S ribosomal subunit. Contacts protein S5. The interaction surface between S4 and S5 is involved in control of translational fidelity.

In terms of biological role, one of the primary rRNA binding proteins, it binds directly to 16S rRNA where it nucleates assembly of the body of the 30S subunit. Its function is as follows. With S5 and S12 plays an important role in translational accuracy. The chain is Small ribosomal subunit protein uS4 from Microcystis aeruginosa (strain NIES-843 / IAM M-2473).